Consider the following 313-residue polypeptide: tRNA dimethylallyltransferase (313 aa).

17-24 (GPTASGKT) lines the ATP pocket. Substrate is bound at residue 19-24 (TASGKT). 3 interaction with substrate tRNA regions span residues 42-45 (DSAL), 166-170 (QRLSR), and 247-252 (RCVGYR).

The protein belongs to the IPP transferase family. Monomer. The cofactor is Mg(2+).

It carries out the reaction adenosine(37) in tRNA + dimethylallyl diphosphate = N(6)-dimethylallyladenosine(37) in tRNA + diphosphate. In terms of biological role, catalyzes the transfer of a dimethylallyl group onto the adenine at position 37 in tRNAs that read codons beginning with uridine, leading to the formation of N6-(dimethylallyl)adenosine (i(6)A). The protein is tRNA dimethylallyltransferase of Serratia proteamaculans (strain 568).